Reading from the N-terminus, the 226-residue chain is Transcription factor bHLH115 (226 aa).

The 52-residue stretch at 66 to 117 (TGSNSKACREKQRRDRLNDKFTELSSVLEPGRTPKTDKVAIINDAIRMVNQA) folds into the bHLH domain.

Homodimer. Interacts with BTS and BHLH47/PYE.

Its subcellular location is the nucleus. The chain is Transcription factor bHLH115 (BHLH115) from Arabidopsis thaliana (Mouse-ear cress).